The following is a 117-amino-acid chain: Large ribosomal subunit protein uL18 (117 aa).

It belongs to the universal ribosomal protein uL18 family. As to quaternary structure, part of the 50S ribosomal subunit; part of the 5S rRNA/L5/L18/L25 subcomplex. Contacts the 5S and 23S rRNAs.

This is one of the proteins that bind and probably mediate the attachment of the 5S RNA into the large ribosomal subunit, where it forms part of the central protuberance. In Vibrio atlanticus (strain LGP32) (Vibrio splendidus (strain Mel32)), this protein is Large ribosomal subunit protein uL18.